Here is a 192-residue protein sequence, read N- to C-terminus: Density-regulated protein homolog (192 aa).

Residues 62-116 (GLEISDEPAADGDEKKKQKRGGKGSKTGAAAAQAAASGGKKKGGGPQKVTLQREP) form a disordered region. Residues 87 to 99 (KTGAAAAQAAASG) show a composition bias toward low complexity. Positions 117-176 (RGKKSVTVIKGLATFDIDLKVASKLFAQKFACGSSVTGADEIVIQGDVKDDLLDLIPEKW) constitute an SUI1 domain.

The protein belongs to the DENR family.

In Caenorhabditis elegans, this protein is Density-regulated protein homolog.